Here is a 228-residue protein sequence, read N- to C-terminus: UPF0328 protein ECU07_0040 (228 aa).

It belongs to the UPF0328 family.

This is UPF0328 protein ECU07_0040 from Encephalitozoon cuniculi (strain GB-M1) (Microsporidian parasite).